The following is a 199-amino-acid chain: Probable NADH dehydrogenase [ubiquinone] iron-sulfur protein 7, mitochondrial (199 aa).

The transit peptide at 1–16 (MLSALRTAGALSTRRL) directs the protein to the mitochondrion. [4Fe-4S] cluster contacts are provided by Cys-74, Cys-75, Cys-139, and Cys-169.

This sequence belongs to the complex I 20 kDa subunit family. In terms of assembly, complex I is composed of 45 different subunits This is a component of the iron-sulfur (IP) fragment of the enzyme. [4Fe-4S] cluster serves as cofactor.

It localises to the mitochondrion. The enzyme catalyses a ubiquinone + NADH + 5 H(+)(in) = a ubiquinol + NAD(+) + 4 H(+)(out). Core subunit of the mitochondrial membrane respiratory chain NADH dehydrogenase (Complex I) that is believed to belong to the minimal assembly required for catalysis. Complex I functions in the transfer of electrons from NADH to the respiratory chain. The immediate electron acceptor for the enzyme is believed to be ubiquinone. In Caenorhabditis briggsae, this protein is Probable NADH dehydrogenase [ubiquinone] iron-sulfur protein 7, mitochondrial.